We begin with the raw amino-acid sequence, 152 residues long: Venom protein family 1 protein 2 (152 aa).

An N-terminal signal peptide occupies residues 1-21 (MAKLVFISFLVASFCLIGCFG). C70 and C150 form a disulfide bridge.

It belongs to the insect vpf1 family. In terms of tissue distribution, expressed by the venom gland (posterior main gland) (at protein level).

It is found in the secreted. This is Venom protein family 1 protein 2 from Platymeris rhadamanthus (Red spot assassin bug).